The chain runs to 142 residues: Small ribosomal subunit protein eS6 (142 aa).

The interval 117–142 (EKPLDELAPKKEKKEGAAGGRAPAKK) is disordered. A compositionally biased stretch (basic and acidic residues) spans 118-132 (KPLDELAPKKEKKEG).

It belongs to the eukaryotic ribosomal protein eS6 family.

The chain is Small ribosomal subunit protein eS6 from Methanocella arvoryzae (strain DSM 22066 / NBRC 105507 / MRE50).